The chain runs to 1399 residues: DNA-directed RNA polymerase subunit beta' (1399 aa).

Residues Cys-70, Cys-72, Cys-85, and Cys-88 each coordinate Zn(2+). Residues Asp-460, Asp-462, and Asp-464 each contribute to the Mg(2+) site. Zn(2+) is bound by residues Cys-814, Cys-888, Cys-895, and Cys-898.

This sequence belongs to the RNA polymerase beta' chain family. The RNAP catalytic core consists of 2 alpha, 1 beta, 1 beta' and 1 omega subunit. When a sigma factor is associated with the core the holoenzyme is formed, which can initiate transcription. The cofactor is Mg(2+). It depends on Zn(2+) as a cofactor.

The enzyme catalyses RNA(n) + a ribonucleoside 5'-triphosphate = RNA(n+1) + diphosphate. DNA-dependent RNA polymerase catalyzes the transcription of DNA into RNA using the four ribonucleoside triphosphates as substrates. The polypeptide is DNA-directed RNA polymerase subunit beta' (Ectopseudomonas mendocina (strain ymp) (Pseudomonas mendocina)).